The following is a 932-amino-acid chain: Protocadherin gamma-A7 (932 aa).

The N-terminal stretch at 1-28 is a signal peptide; that stretch reads MAAQPRGGDCRGFVLLSILLGTPWEAWA. Cadherin domains follow at residues 29–133, 134–242, 243–347, 348–452, 453–562, and 570–682; these read GRIL…VPRF, LTEE…TPVF, SLPQ…APEV, TMTS…PPTF, PHSS…PPEI, and DGST…EPSD. Residues 29–692 lie on the Extracellular side of the membrane; sequence GRILYSVSEE…GPYNYDLTLY (664 aa). 2 N-linked (GlcNAc...) asparagine glycosylation sites follow: asparagine 419 and asparagine 545. The helical transmembrane segment at 693-713 threads the bilayer; the sequence is LVVAVAAVSCVFLAFVLVLLA. Topologically, residues 714 to 932 are cytoplasmic; sequence LRLRRWHKSR…KKKSGKKEKK (219 aa). Disordered stretches follow at residues 804 to 841 and 902 to 932; these read VPSIQQAPPNTDWRFSQAQRPGTSGSQNGDDTGTWPNN and ATLTNAAGKRDGKAPAGGNGNKKKSGKKEKK. The segment covering 806-841 has biased composition (polar residues); that stretch reads SIQQAPPNTDWRFSQAQRPGTSGSQNGDDTGTWPNN. Over residues 922 to 932 the composition is skewed to basic residues; it reads NKKKSGKKEKK.

The protein localises to the cell membrane. Potential calcium-dependent cell-adhesion protein. May be involved in the establishment and maintenance of specific neuronal connections in the brain. The protein is Protocadherin gamma-A7 (PCDHGA7) of Pan troglodytes (Chimpanzee).